A 30-amino-acid chain; its full sequence is Brevinin-2Ej (30 aa).

A disulfide bond links C24 and C30.

Expressed by the skin glands.

Its subcellular location is the secreted. In terms of biological role, shows antibacterial activity against representative Gram-negative and Gram-positive bacterial species, and hemolytic activity. The sequence is that of Brevinin-2Ej from Pelophylax ridibundus (Marsh frog).